The primary structure comprises 228 residues: Ribosomal RNA small subunit methyltransferase G (228 aa).

S-adenosyl-L-methionine-binding positions include Gly82, Leu87, 105–107, 133–134, and Arg147; these read DAT and VE.

The protein belongs to the methyltransferase superfamily. RNA methyltransferase RsmG family.

Its subcellular location is the cytoplasm. Specifically methylates the N7 position of a guanine in 16S rRNA. The sequence is that of Ribosomal RNA small subunit methyltransferase G from Pelodictyon phaeoclathratiforme (strain DSM 5477 / BU-1).